A 308-amino-acid chain; its full sequence is Probable 5-dehydro-4-deoxyglucarate dehydratase (308 aa).

It belongs to the DapA family.

The catalysed reaction is 5-dehydro-4-deoxy-D-glucarate + H(+) = 2,5-dioxopentanoate + CO2 + H2O. The protein operates within carbohydrate acid metabolism; D-glucarate degradation; 2,5-dioxopentanoate from D-glucarate: step 2/2. The polypeptide is Probable 5-dehydro-4-deoxyglucarate dehydratase (ycbC) (Bacillus subtilis (strain 168)).